The sequence spans 159 residues: CASP-like protein 1C1 (159 aa).

The Cytoplasmic segment spans residues 1-6 (MAKIKR). A helical membrane pass occupies residues 7-27 (IITTLVRLLVLGAALSATIVM). The Extracellular segment spans residues 28–50 (VTSHDSAEVLNLSFDAKYTNARA). N-linked (GlcNAc...) asparagine glycosylation occurs at N38. The helical transmembrane segment at 51 to 73 (FVYFAITNAIASGYSFIALFLSF) threads the bilayer. The Cytoplasmic portion of the chain corresponds to 74-86 (STPLWHLVFLLDV). Residues 87-107 (FMTLLLTSSISVALAIADVGK) form a helical membrane-spanning segment. Residues 108–130 (KGNSHAGWLPVCGQVPEFCDHVT) are Extracellular-facing. The helical transmembrane segment at 131-151 (GALIAGFSAAVLYLVLLLFSI) threads the bilayer. Residues 152–159 (HAVLNPKP) are Cytoplasmic-facing.

This sequence belongs to the Casparian strip membrane proteins (CASP) family. Homodimer and heterodimers.

It localises to the cell membrane. This chain is CASP-like protein 1C1, found in Vitis vinifera (Grape).